Consider the following 355-residue polypeptide: UDP-N-acetylglucosamine--N-acetylmuramyl-(pentapeptide) pyrophosphoryl-undecaprenol N-acetylglucosamine transferase (355 aa).

UDP-N-acetyl-alpha-D-glucosamine is bound by residues threonine 15 to glycine 17, asparagine 127, arginine 163, serine 191, isoleucine 244, alanine 263 to glutamate 268, and glutamine 288.

This sequence belongs to the glycosyltransferase 28 family. MurG subfamily.

It is found in the cell inner membrane. The enzyme catalyses di-trans,octa-cis-undecaprenyl diphospho-N-acetyl-alpha-D-muramoyl-L-alanyl-D-glutamyl-meso-2,6-diaminopimeloyl-D-alanyl-D-alanine + UDP-N-acetyl-alpha-D-glucosamine = di-trans,octa-cis-undecaprenyl diphospho-[N-acetyl-alpha-D-glucosaminyl-(1-&gt;4)]-N-acetyl-alpha-D-muramoyl-L-alanyl-D-glutamyl-meso-2,6-diaminopimeloyl-D-alanyl-D-alanine + UDP + H(+). It participates in cell wall biogenesis; peptidoglycan biosynthesis. In terms of biological role, cell wall formation. Catalyzes the transfer of a GlcNAc subunit on undecaprenyl-pyrophosphoryl-MurNAc-pentapeptide (lipid intermediate I) to form undecaprenyl-pyrophosphoryl-MurNAc-(pentapeptide)GlcNAc (lipid intermediate II). This Escherichia coli (strain 55989 / EAEC) protein is UDP-N-acetylglucosamine--N-acetylmuramyl-(pentapeptide) pyrophosphoryl-undecaprenol N-acetylglucosamine transferase.